Reading from the N-terminus, the 548-residue chain is Chaperonin GroEL (548 aa).

Residues 30-33 (TLGP), Lys51, 87-91 (DGTTT), Gly415, 479-481 (NAA), and Asp495 each bind ATP.

This sequence belongs to the chaperonin (HSP60) family. Forms a cylinder of 14 subunits composed of two heptameric rings stacked back-to-back. Interacts with the co-chaperonin GroES.

The protein localises to the cytoplasm. The catalysed reaction is ATP + H2O + a folded polypeptide = ADP + phosphate + an unfolded polypeptide.. In terms of biological role, together with its co-chaperonin GroES, plays an essential role in assisting protein folding. The GroEL-GroES system forms a nano-cage that allows encapsulation of the non-native substrate proteins and provides a physical environment optimized to promote and accelerate protein folding. The polypeptide is Chaperonin GroEL (Nitratidesulfovibrio vulgaris (strain DSM 19637 / Miyazaki F) (Desulfovibrio vulgaris)).